Consider the following 346-residue polypeptide: Glucose-6-phosphatase 3 (346 aa).

The Lumenal segment spans residues 1-25; the sequence is MESTLSAGIMMAEALQNQLPGLENM. The chain crosses the membrane as a helical span at residues 26–46; it reads WLWVTFLADPKNLFQFYFPAV. Residues 47–56 are Cytoplasmic-facing; the sequence is YYASRRLGIS. Residues 57–77 form a helical membrane-spanning segment; the sequence is LFWIAFITEWLNLVFKWFLFG. Residues 78-115 lie on the Lumenal side of the membrane; that stretch reads DRPFWWVHESGYSAQTPVQIHQFPSSCETGPGSPSGHC. Arg-79 is a binding site for substrate. His-114 acts as the Proton donor in catalysis. A helical membrane pass occupies residues 116–135; the sequence is MITGAALWPVMIAISSQVAS. Residues 136–140 lie on the Cytoplasmic side of the membrane; that stretch reads QTRSP. The chain crosses the membrane as a helical span at residues 141-162; sequence WVRVIPGLAYCTFLLAVGLSRV. Arg-161 provides a ligand contact to substrate. Over 163–167 the chain is Lumenal; sequence FLLAH. Catalysis depends on His-167, which acts as the Nucleophile. A helical membrane pass occupies residues 168 to 186; that stretch reads FPHQVLAGLLAGVILGWLL. Over 187-197 the chain is Cytoplasmic; the sequence is SPRVPMERELS. A helical transmembrane segment spans residues 198-218; that stretch reads FYGLTALTLMLGASLMYWTLF. Residues 219–254 are Lumenal-facing; that stretch reads TLGLDLSWSINLASKWCDRPEWVLVDSRPFASLSRD. The helical transmembrane segment at 255 to 273 threads the bilayer; that stretch reads SGSALGLGIALHTPCYAQI. At 274-283 the chain is on the cytoplasmic side; that stretch reads RRVHLGNGQK. A helical membrane pass occupies residues 284–304; the sequence is IACFVLAMGLLVFLEWLGHPP. Residues 305–307 lie on the Lumenal side of the membrane; the sequence is QIS. Residues 308–328 form a helical membrane-spanning segment; it reads LFYIFNFLKFTLWPCLVVALV. Residues 329–346 lie on the Cytoplasmic side of the membrane; the sequence is PWMVHTLSAQEAPPIRSS.

It belongs to the glucose-6-phosphatase family. Expressed in liver and kidney. It is the major glucose-6-phosphatase expressed in the small intestine.

It localises to the endoplasmic reticulum membrane. It catalyses the reaction D-glucose 6-phosphate + H2O = D-glucose + phosphate. It participates in carbohydrate biosynthesis; gluconeogenesis. Its activity is regulated as follows. Inhibited by vanadate. Its function is as follows. Hydrolyzes glucose-6-phosphate to glucose in the endoplasmic reticulum. May form with the glucose-6-phosphate transporter (SLC37A4/G6PT) a ubiquitously expressed complex responsible for glucose production through glycogenolysis and gluconeogenesis. Probably required for normal neutrophil function. The sequence is that of Glucose-6-phosphatase 3 (G6pc3) from Rattus norvegicus (Rat).